The sequence spans 429 residues: Serine carboxypeptidase-like (429 aa).

Intrachain disulfides connect Cys58–Cys298, Cys226–Cys241, and Cys264–Cys269. Asn76 carries N-linked (GlcNAc...) asparagine glycosylation. Residue Ser148 is part of the active site. Asp336 is a catalytic residue. Cys339 contributes to the substrate binding site. His393 is a catalytic residue. N-linked (GlcNAc...) asparagine glycosylation is found at Asn414 and Asn417.

The protein belongs to the peptidase S10 family. Abundant in germinated embryos composed of leaf, root, and scutellum.

The protein is Serine carboxypeptidase-like (CBP31) of Oryza sativa subsp. japonica (Rice).